Here is a 125-residue protein sequence, read N- to C-terminus: Small ribosomal subunit protein uS12m (125 aa).

Disordered stretches follow at residues 1–29 and 105–125; these read MPTKNQLIRHGREEKQRTDRTRASDQCPQ and LGIPDRRKGRSKYGAERPKSK. The span at 10 to 23 shows a compositional bias: basic and acidic residues; that stretch reads HGREEKQRTDRTRA.

It belongs to the universal ribosomal protein uS12 family.

Its subcellular location is the mitochondrion. Protein S12 is involved in the translation initiation step. The chain is Small ribosomal subunit protein uS12m (RPS12) from Oryza sativa subsp. japonica (Rice).